The following is a 1181-amino-acid chain: HEAT repeat-containing protein 6 (1181 aa).

Residues 159–198 form an HEAT 1 repeat; the sequence is PELLGNTGLLMKLSDLAQSDPEVRRAAVHCMANLCLSVPG. Disordered stretches follow at residues 292 to 347 and 371 to 390; these read QYDG…PVTG and LDGS…SSSS. The span at 300–312 shows a compositional bias: polar residues; that stretch reads KPQQSESSASRPT. Residues 313 to 325 are compositionally biased toward basic residues; it reads LNKKKKSKVKPKK. Phosphoserine occurs at positions 336 and 337. A phosphoserine mark is found at serine 399 and serine 402. 3 HEAT repeats span residues 452 to 490, 515 to 552, and 558 to 595; these read ELGS…GSKQ, SIRE…NAPY, and SLLT…THAP. Residues 613–646 form a disordered region; sequence NSNSATPHLSPPDWWKKAPAGPSLEETSVSSPKG. The residue at position 618 (threonine 618) is a Phosphothreonine. Positions 637-646 are enriched in polar residues; that stretch reads EETSVSSPKG. Serine 643 bears the Phosphoserine mark.

Amplified in breast cancer cell lines MCF-7 and BT-474.

In terms of biological role, amplification-dependent oncogene. This is HEAT repeat-containing protein 6 (HEATR6) from Homo sapiens (Human).